The chain runs to 752 residues: Ribosomal protein S6 kinase 2 alpha (752 aa).

Positions 80–339 (FELLKVLGQG…AEEIKRHPFY (260 aa)) constitute a Protein kinase 1 domain. ATP is bound by residues 86 to 94 (LGQGSFGKV) and lysine 112. Aspartate 205 (proton acceptor) is an active-site residue. Serine 239 is modified (phosphoserine). An AGC-kinase C-terminal domain is found at 340–409 (STIDWNKLYR…VATGLMEDSK (70 aa)). Threonine 377 is subject to Phosphothreonine. Position 381 is a phosphoserine (serine 381). Serine 398 is modified (phosphoserine; by autocatalysis). Positions 435-692 (YVVKEAIGVG…AKQVLQHPWI (258 aa)) constitute a Protein kinase 2 domain. Residues 441–449 (IGVGSYSVC) and lysine 464 contribute to the ATP site. Catalysis depends on aspartate 552, which acts as the Proton acceptor. Threonine 590 bears the Phosphothreonine mark. Serine 749 bears the Phosphoserine mark.

It belongs to the protein kinase superfamily. AGC Ser/Thr protein kinase family. S6 kinase subfamily. Mg(2+) serves as cofactor. Post-translationally, autophosphorylated on Ser-398, as part of the activation process. Small and large intestine, spleen, stomach, and bursa, and to a lesser extent lung and kidney.

It carries out the reaction L-seryl-[protein] + ATP = O-phospho-L-seryl-[protein] + ADP + H(+). The catalysed reaction is L-threonyl-[protein] + ATP = O-phospho-L-threonyl-[protein] + ADP + H(+). Its activity is regulated as follows. Activated by multiple phosphorylations on threonine and serine residues. Serine/threonine kinase that may play a role in mediating the growth-factor and stress induced activation of transcription. In Gallus gallus (Chicken), this protein is Ribosomal protein S6 kinase 2 alpha (RPS6KA).